The chain runs to 450 residues: tRNA-2-methylthio-N(6)-dimethylallyladenosine synthase (450 aa).

The region spanning 7-127 (KRLYIKTYGC…LPELIARAHR (121 aa)) is the MTTase N-terminal domain. 6 residues coordinate [4Fe-4S] cluster: Cys16, Cys52, Cys90, Cys165, Cys169, and Cys172. Residues 151-378 (QVSGVSAFLT…NQLLDEQQKA (228 aa)) form the Radical SAM core domain. Positions 381 to 443 (ILQVGKTMPV…KMSLGGVLET (63 aa)) constitute a TRAM domain.

This sequence belongs to the methylthiotransferase family. MiaB subfamily. Monomer. [4Fe-4S] cluster serves as cofactor.

It localises to the cytoplasm. It catalyses the reaction N(6)-dimethylallyladenosine(37) in tRNA + (sulfur carrier)-SH + AH2 + 2 S-adenosyl-L-methionine = 2-methylsulfanyl-N(6)-dimethylallyladenosine(37) in tRNA + (sulfur carrier)-H + 5'-deoxyadenosine + L-methionine + A + S-adenosyl-L-homocysteine + 2 H(+). In terms of biological role, catalyzes the methylthiolation of N6-(dimethylallyl)adenosine (i(6)A), leading to the formation of 2-methylthio-N6-(dimethylallyl)adenosine (ms(2)i(6)A) at position 37 in tRNAs that read codons beginning with uridine. This chain is tRNA-2-methylthio-N(6)-dimethylallyladenosine synthase, found in Caulobacter sp. (strain K31).